Here is a 342-residue protein sequence, read N- to C-terminus: uncharacterized protein (342 aa).

The protein belongs to the bacterial luciferase oxidoreductase family.

This is an uncharacterized protein from Sinorhizobium fredii (strain NBRC 101917 / NGR234).